The sequence spans 246 residues: MAQVNMRDLLKAGAHFGHQTRYWNPKMSKYIFGARNKIHIINLEHTLPALNDALAVIEKMVASNNKILFVGTKRAASKIVKEEARRAGQPFVNHRWLGGMLTNFKTIRVSIKRLRELEAMHEDGTFEKLTKKEVLMATREQDKLERSVGGIKDMGGLPDALFVVDVDHERIAINEANKLGIPVIGVVDTNSNPDGVDYVIPGNDDSIRAIQIYAQAVADVCVRAKDNSASEFVEVTETNENEAAAE.

The protein belongs to the universal ribosomal protein uS2 family.

The protein is Small ribosomal subunit protein uS2 of Chromohalobacter salexigens (strain ATCC BAA-138 / DSM 3043 / CIP 106854 / NCIMB 13768 / 1H11).